The primary structure comprises 570 residues: Sulfite reductase [NADPH] hemoprotein beta-component (570 aa).

Residues C433, C439, C478, and C482 each contribute to the [4Fe-4S] cluster site. Residue C482 coordinates siroheme.

The protein belongs to the nitrite and sulfite reductase 4Fe-4S domain family. In terms of assembly, alpha(8)-beta(8). The alpha component is a flavoprotein, the beta component is a hemoprotein. Requires siroheme as cofactor. The cofactor is [4Fe-4S] cluster.

The enzyme catalyses hydrogen sulfide + 3 NADP(+) + 3 H2O = sulfite + 3 NADPH + 4 H(+). The protein operates within sulfur metabolism; hydrogen sulfide biosynthesis; hydrogen sulfide from sulfite (NADPH route): step 1/1. Component of the sulfite reductase complex that catalyzes the 6-electron reduction of sulfite to sulfide. This is one of several activities required for the biosynthesis of L-cysteine from sulfate. The protein is Sulfite reductase [NADPH] hemoprotein beta-component of Aeromonas hydrophila subsp. hydrophila (strain ATCC 7966 / DSM 30187 / BCRC 13018 / CCUG 14551 / JCM 1027 / KCTC 2358 / NCIMB 9240 / NCTC 8049).